Reading from the N-terminus, the 726-residue chain is Pyrroloquinoline quinone-dependent pyranose dehydrogenase (726 aa).

An N-terminal signal peptide occupies residues 1-18 (MRSSSLAWALGLVALANA). Heme b contacts are provided by methionine 83 and tyrosine 108. A disulfide bridge links cysteine 138 with cysteine 141. Residue asparagine 140 is glycosylated (N-linked (GlcNAc...) asparagine). 2 residues coordinate heme b: arginine 181 and histidine 182. Residues 211–242 (PPLSGGAPTQPPTQQPPTTTAPPPPPPSSTFV) are disordered. Residues 219-238 (TQPPTQQPPTTTAPPPPPPS) are compositionally biased toward pro residues. Residues cysteine 244 and cysteine 302 are joined by a disulfide bond. Positions 273, 363, 430, and 431 each coordinate pyrroloquinoline quinone. Residues serine 449 and aspartate 451 each coordinate Ca(2+). Cysteines 492 and 525 form a disulfide. Pyrroloquinoline quinone is bound at residue histidine 539. N-linked (GlcNAc...) asparagine glycosylation occurs at asparagine 551. Residues histidine 560, tryptophan 563, and asparagine 564 each contribute to the pyrroloquinoline quinone site. The cysteines at positions 611 and 619 are disulfide-linked. Residue arginine 621 coordinates pyrroloquinoline quinone. Residues 659–678 (ITQPPITTSPPTPTTPPVVQ) show a composition bias toward pro residues. A disordered region spans residues 659 to 689 (ITQPPITTSPPTPTTPPVVQPPTTVAPPQAS). Positions 679–689 (PPTTVAPPQAS) are enriched in low complexity. One can recognise a CBM1 domain in the interval 688–724 (ASQTLWGQCGGQGWTGPTLCPANSVCRESNQWYSQCV).

Belongs to the sugar dehydrogenase AA12 family. It depends on Ca(2+) as a cofactor. Pyrroloquinoline quinone serves as cofactor. Heme b is required as a cofactor.

Its subcellular location is the secreted. Pyrroloquinoline quinone (PPQ)-dependent oxidoreductase that catalyzes the oxidation of various sugars including L-galactose, L-gulose, D-talose, D-arabinose, D-lyxose, L-fucose and D-glucosone. Shows significant activity toward the reverse-chair conformation of pyranoses. Shows little or no activity toward abundant sugars such as D-glucose, D-fructose, cellobiose, as well L-xylose and L-glucose. This enzyme is able to direct electrical communication with electrodes, without artificial electron mediators, thus allowing direct electron transfer (DET)-type bioelectrocatalysis. Exhibits binding affinity for insoluble cellulose. PDH does not oxidize cello-oligosaccharides but is able to activate the C-1-oxidizing Neurospora crassa LPMO9F and the C-4-oxidizing Neurospora crassa LPMO9C thanks to the electron-tranfer activity of the cytochrome domain and the localization of PDH in the vicinity of the LPMO substrates by the CBM1 domain. The protein is Pyrroloquinoline quinone-dependent pyranose dehydrogenase of Coprinopsis cinerea (strain Okayama-7 / 130 / ATCC MYA-4618 / FGSC 9003) (Inky cap fungus).